The primary structure comprises 404 residues: tRNA pseudouridine(31) synthase (404 aa).

The active site involves Asp168.

Belongs to the pseudouridine synthase RluA family.

The protein localises to the cytoplasm. The protein resides in the mitochondrion. The enzyme catalyses uridine(31) in tRNA = pseudouridine(31) in tRNA. Functionally, catalyzes the formation of pseudouridine at position 31 in the psi GC loop of tRNAS. The protein is tRNA pseudouridine(31) synthase (PUS6) of Saccharomyces cerevisiae (strain ATCC 204508 / S288c) (Baker's yeast).